The following is a 91-amino-acid chain: Small ribosomal subunit protein uS17 (91 aa).

It belongs to the universal ribosomal protein uS17 family. As to quaternary structure, part of the 30S ribosomal subunit.

Its function is as follows. One of the primary rRNA binding proteins, it binds specifically to the 5'-end of 16S ribosomal RNA. The chain is Small ribosomal subunit protein uS17 from Malacoplasma penetrans (strain HF-2) (Mycoplasma penetrans).